Here is a 474-residue protein sequence, read N- to C-terminus: Recombinase Flp protein (474 aa).

The region spanning 135-421 is the Tyr recombinase Flp-type domain; it reads LSNNVGAEIS…LYLYTYAQQK (287 aa). Residue Y342 is the O-(3'-phospho-DNA)-tyrosine intermediate of the active site. Residues 426–474 form a disordered region; that stretch reads ADPNEQNRLFSSESPAHPFLTPQSTGSSTPLTWTAPKTLSTGLMTPGEE. 2 stretches are compositionally biased toward polar residues: residues 429–439 and 446–468; these read NEQNRLFSSES and TPQS…STGL.

This sequence belongs to the 'phage' integrase family.

In terms of biological role, catalyzes the recombination between the large inverted repetitions of the plasmid. This Zygosaccharomyces bailii protein is Recombinase Flp protein.